Consider the following 213-residue polypeptide: Small ribosomal subunit protein eS1 (213 aa).

A disordered region spans residues 189–213 (ARPEEVAAEEETAVDVDEEDVDVEA). Acidic residues predominate over residues 194–213 (VAAEEETAVDVDEEDVDVEA).

Belongs to the eukaryotic ribosomal protein eS1 family.

This chain is Small ribosomal subunit protein eS1, found in Haloarcula marismortui (strain ATCC 43049 / DSM 3752 / JCM 8966 / VKM B-1809) (Halobacterium marismortui).